The chain runs to 521 residues: Runt-related transcription factor 2 (521 aa).

2 disordered regions span residues 18 to 59 and 222 to 340; these read FWDP…QQQQ and DGPR…RRIS. 2 stretches are compositionally biased toward low complexity: residues 21 to 33 and 47 to 59; these read PSTS…PSSS and AAQQ…QQQQ. Positions 101–229 constitute a Runt domain; it reads TMVEIIADHP…TVDGPREPRR (129 aa). A Glycyl lysine isopeptide (Lys-Gly) (interchain with G-Cter in SUMO2) cross-link involves residue lysine 238. A required for interaction with FOXO1 region spans residues 242 to 258; that stretch reads FSDRLSDLGRIPHPSMR. Arginine 267 bears the Asymmetric dimethylarginine mark. Residues 267-326 are compositionally biased toward polar residues; it reads RPSLNSAPSPFNPQGQSQITDPRQAQSSPPWSYDQSYPSYLSQMTSPSIHSTTPLSSTRG. Residues 336 to 439 are interaction with KAT6A; that stretch reads PRRISDDDTA…SQSQSGPFQT (104 aa). At serine 340 the chain carries Phosphoserine. Residues 374-468 form an interaction with KAT6B region; that stretch reads RQFPSISSLT…VPGGDRSPSR (95 aa). Serine 451 bears the Phosphoserine; by CDK1 mark. Residues 460–521 form a disordered region; that stretch reads PGGDRSPSRM…RMDESVWRPY (62 aa). 2 stretches are compositionally biased toward polar residues: residues 473–492 and 499–511; these read CTTT…NQND and SHSS…NSSG. The span at 512 to 521 shows a compositional bias: basic and acidic residues; that stretch reads RMDESVWRPY.

As to quaternary structure, heterodimer of an alpha and a beta subunit. The alpha subunit binds DNA as a monomer and through the Runt domain. DNA-binding is increased by heterodimerization. Interacts with XRCC6 (Ku70) and XRCC5 (Ku80). Interacts with HIVEP3. Interacts with IFI204. Interaction with SATB2; the interaction results in enhanced DNA binding and transactivation by these transcription factors. Binds to HIPK3. Interacts with FOXO1 (via a C-terminal region); the interaction inhibits RUNX2 transcriptional activity towards BGLAP. This interaction is prevented on insulin or IGF1 stimulation as FOXO1 is exported from the nucleus. Interacts with CCNB1, KAT6A and KAT6B. Interacts with FOXP3. Interacts with TMEM119. Interacts with OLFM2. Interacts with IPO7; the interaction inhibits RUNX2 nuclear translocation in osteoblasts. In terms of assembly, interacts with DDX5. Phosphorylated; probably by MAP kinases (MAPK). Phosphorylation by HIPK3 is required for the SPEN/MINT and FGF2 transactivation during osteoblastic differentiation. Phosphorylation at Ser-451 by CDK1 promotes endothelial cell proliferation required for tumor angiogenesis probably by facilitating cell cycle progression. Isoform 3 is phosphorylated on Ser-340. As to expression, specifically expressed in osteoblasts.

It localises to the nucleus. It is found in the cytoplasm. Transcription factor involved in osteoblastic differentiation and skeletal morphogenesis. Essential for the maturation of osteoblasts and both intramembranous and endochondral ossification. CBF binds to the core site, 5'-PYGPYGGT-3', of a number of enhancers and promoters, including murine leukemia virus, polyomavirus enhancer, T-cell receptor enhancers, osteocalcin, osteopontin, bone sialoprotein, alpha 1(I) collagen, LCK, IL-3 and GM-CSF promoters. In osteoblasts, supports transcription activation: synergizes with SPEN/MINT to enhance FGFR2-mediated activation of the osteocalcin FGF-responsive element (OCFRE). Inhibits KAT6B-dependent transcriptional activation. The protein is Runt-related transcription factor 2 (RUNX2) of Homo sapiens (Human).